The following is a 242-amino-acid chain: Probable porphobilinogen deaminase (242 aa).

Belongs to the HMBS family.

The enzyme catalyses 4 porphobilinogen + H2O = hydroxymethylbilane + 4 NH4(+). The protein operates within porphyrin-containing compound metabolism; protoporphyrin-IX biosynthesis; coproporphyrinogen-III from 5-aminolevulinate: step 2/4. Its function is as follows. Tetrapolymerization of the monopyrrole PBG into the hydroxymethylbilane pre-uroporphyrinogen in several discrete steps. In Chlamydia muridarum (strain MoPn / Nigg), this protein is Probable porphobilinogen deaminase (hemC).